Reading from the N-terminus, the 348-residue chain is NADH-quinone oxidoreductase subunit H (348 aa).

The next 8 helical transmembrane spans lie at Ile-21–Ala-41, Gly-87–Ile-107, Ile-120–Gly-140, Ile-166–Val-186, Ile-193–Phe-213, Asn-258–Val-278, Leu-283–Phe-303, and Trp-323–Leu-343.

The protein belongs to the complex I subunit 1 family. As to quaternary structure, NDH-1 is composed of 14 different subunits. Subunits NuoA, H, J, K, L, M, N constitute the membrane sector of the complex.

It localises to the cell inner membrane. The enzyme catalyses a quinone + NADH + 5 H(+)(in) = a quinol + NAD(+) + 4 H(+)(out). Functionally, NDH-1 shuttles electrons from NADH, via FMN and iron-sulfur (Fe-S) centers, to quinones in the respiratory chain. The immediate electron acceptor for the enzyme in this species is believed to be ubiquinone. Couples the redox reaction to proton translocation (for every two electrons transferred, four hydrogen ions are translocated across the cytoplasmic membrane), and thus conserves the redox energy in a proton gradient. This subunit may bind ubiquinone. In Rhizorhabdus wittichii (strain DSM 6014 / CCUG 31198 / JCM 15750 / NBRC 105917 / EY 4224 / RW1) (Sphingomonas wittichii), this protein is NADH-quinone oxidoreductase subunit H.